The chain runs to 120 residues: MAVDTTAEVKAIARYIRMSPHKVRRVLDQIRGRSYREALIILEFMPYRACDPILKVLRSAAANAEHNEGLDRATLVVSQAYADGGPSLRRYRPRAQGRAYQIRKPTCHITVAVAPEITEE.

Belongs to the universal ribosomal protein uL22 family. Part of the 50S ribosomal subunit.

Functionally, this protein binds specifically to 23S rRNA; its binding is stimulated by other ribosomal proteins, e.g. L4, L17, and L20. It is important during the early stages of 50S assembly. It makes multiple contacts with different domains of the 23S rRNA in the assembled 50S subunit and ribosome. In terms of biological role, the globular domain of the protein is located near the polypeptide exit tunnel on the outside of the subunit, while an extended beta-hairpin is found that lines the wall of the exit tunnel in the center of the 70S ribosome. The polypeptide is Large ribosomal subunit protein uL22 (Rippkaea orientalis (strain PCC 8801 / RF-1) (Cyanothece sp. (strain PCC 8801))).